Reading from the N-terminus, the 124-residue chain is Fluoride-specific ion channel FluC (124 aa).

Transmembrane regions (helical) follow at residues Leu4–Ile24, Phe35–Gly55, Pro62–Phe82, and Trp95–Leu115. Gly74 and Thr77 together coordinate Na(+).

It belongs to the fluoride channel Fluc/FEX (TC 1.A.43) family.

The protein localises to the cell inner membrane. The enzyme catalyses fluoride(in) = fluoride(out). Na(+) is not transported, but it plays an essential structural role and its presence is essential for fluoride channel function. Its function is as follows. Fluoride-specific ion channel. Important for reducing fluoride concentration in the cell, thus reducing its toxicity. The protein is Fluoride-specific ion channel FluC of Shewanella denitrificans (strain OS217 / ATCC BAA-1090 / DSM 15013).